The primary structure comprises 354 residues: Rhodopsin (354 aa).

Residues 1 to 36 (MNGTEGPMFYVPMSNATGVVKSPYDYPQYYLVAPWA) are Extracellular-facing. N-linked (GlcNAc...) asparagine glycosylation is found at Asn2 and Asn15. Residues 37–61 (YGCLAAYMFFLIITGFPINFLTLYV) form a helical membrane-spanning segment. At 62–73 (TIEHKKLRTPLN) the chain is on the cytoplasmic side. The helical transmembrane segment at 74 to 96 (YILLNLAISDLFMVFGGFTTTMY) threads the bilayer. Residues 97–110 (TSLHGYFVFGRIGC) lie on the Extracellular side of the membrane. Cys110 and Cys187 are oxidised to a cystine. Residues 111–133 (NLEGFFATLGGEMGLWSLVVLAF) form a helical membrane-spanning segment. A 'Ionic lock' involved in activated form stabilization motif is present at residues 134 to 136 (ERW). Over 134–152 (ERWMVVCKPVSNFRFGENH) the chain is Cytoplasmic. Residues 153-173 (AIMGVVFTWFMACTCAVPPLV) traverse the membrane as a helical segment. At 174-202 (GWSRYIPEGMQCSCGVDYYTRAPGYNNES) the chain is on the extracellular side. Residues 203–224 (FVIYMFLVHFIIPLIVIFFCYG) traverse the membrane as a helical segment. Topologically, residues 225–252 (RLVCTVKDAAAQQQESETTQRAEREVTR) are cytoplasmic. The helical transmembrane segment at 253 to 274 (MVVIMVIGFLICWIPYASVAWY) threads the bilayer. The Extracellular portion of the chain corresponds to 275–286 (IFTHQGSEFGPV). Residues 287–308 (FMTVPAFFAKSAAVYNPCIYIC) form a helical membrane-spanning segment. Lys296 carries the post-translational modification N6-(retinylidene)lysine. Over 309 to 354 (MNKQFRHCMITTLCCGKNPFEEEEGASTTASKTEASSVSSSSVSPA) the chain is Cytoplasmic. S-palmitoyl cysteine attachment occurs at residues Cys322 and Cys323. Residues 333 to 354 (GASTTASKTEASSVSSSSVSPA) form a disordered region. A compositionally biased stretch (low complexity) spans 334-354 (ASTTASKTEASSVSSSSVSPA).

Belongs to the G-protein coupled receptor 1 family. Opsin subfamily. Phosphorylated on some or all of the serine and threonine residues present in the C-terminal region. Post-translationally, contains one covalently linked retinal chromophore.

The protein resides in the membrane. Its subcellular location is the cell projection. It is found in the cilium. The protein localises to the photoreceptor outer segment. Photoreceptor required for image-forming vision at low light intensity. While most salt water fish species use retinal as chromophore, most freshwater fish use 3-dehydroretinal, or a mixture of retinal and 3-dehydroretinal. Light-induced isomerization of 11-cis to all-trans retinal triggers a conformational change that activates signaling via G-proteins. Subsequent receptor phosphorylation mediates displacement of the bound G-protein alpha subunit by arrestin and terminates signaling. The sequence is that of Rhodopsin (rho) from Cyprinus carpio (Common carp).